The chain runs to 400 residues: Phosphoglycerate kinase (400 aa).

Substrate is bound by residues 23–25 (DLN), Arg-38, 61–64 (HFGR), Arg-120, and Arg-153. ATP is bound by residues Lys-203, Glu-325, and 355–358 (GGDT).

It belongs to the phosphoglycerate kinase family. As to quaternary structure, monomer.

The protein localises to the cytoplasm. It catalyses the reaction (2R)-3-phosphoglycerate + ATP = (2R)-3-phospho-glyceroyl phosphate + ADP. Its pathway is carbohydrate degradation; glycolysis; pyruvate from D-glyceraldehyde 3-phosphate: step 2/5. This is Phosphoglycerate kinase from Methylorubrum extorquens (strain PA1) (Methylobacterium extorquens).